The chain runs to 381 residues: 8-amino-7-oxononanoate synthase (381 aa).

Arginine 27 is a substrate binding site. 105–106 (GY) contacts pyridoxal 5'-phosphate. Residue histidine 130 participates in substrate binding. Residues serine 176, 201-204 (DEAH), and 232-235 (TLSK) each bind pyridoxal 5'-phosphate. An N6-(pyridoxal phosphate)lysine modification is found at lysine 235. Threonine 345 lines the substrate pocket.

This sequence belongs to the class-II pyridoxal-phosphate-dependent aminotransferase family. BioF subfamily. In terms of assembly, homodimer. It depends on pyridoxal 5'-phosphate as a cofactor.

It carries out the reaction 6-carboxyhexanoyl-[ACP] + L-alanine + H(+) = (8S)-8-amino-7-oxononanoate + holo-[ACP] + CO2. The protein operates within cofactor biosynthesis; biotin biosynthesis. Its function is as follows. Catalyzes the decarboxylative condensation of pimeloyl-[acyl-carrier protein] and L-alanine to produce 8-amino-7-oxononanoate (AON), [acyl-carrier protein], and carbon dioxide. The protein is 8-amino-7-oxononanoate synthase of Mycolicibacterium paratuberculosis (strain ATCC BAA-968 / K-10) (Mycobacterium paratuberculosis).